A 519-amino-acid polypeptide reads, in one-letter code: AarF domain-containing protein kinase 1 (519 aa).

Positions 145–481 constitute a Protein kinase domain; that stretch reads SFEDTPLGAA…SLYRRVHISL (337 aa). Residues 151–159 and Lys-173 contribute to the ATP site; that span reads LGAASLAQV. Catalysis depends on Asp-305, which acts as the Proton acceptor.

The protein belongs to the protein kinase superfamily. ADCK protein kinase family.

It localises to the mitochondrion. Functionally, appears to be essential for maintaining mitochondrial cristae formation and mitochondrial function by acting via YME1L1 in a kinase-independent manner to regulate essential mitochondrial structural proteins OPA1 and IMMT. The action of this enzyme is not yet clear. It is not known if it has protein kinase activity and what type of substrate it would phosphorylate (Ser, Thr or Tyr). This chain is AarF domain-containing protein kinase 1 (ADCK1), found in Gallus gallus (Chicken).